Consider the following 488-residue polypeptide: Protein nucleotidyltransferase YdiU (488 aa).

ATP contacts are provided by Gly-91, Gly-93, Arg-94, Lys-114, Asp-126, Gly-127, Arg-177, and Arg-184. The Proton acceptor role is filled by Asp-253. 2 residues coordinate Mg(2+): Asn-254 and Asp-263. Residue Asp-263 coordinates ATP.

Belongs to the SELO family. It depends on Mg(2+) as a cofactor. Mn(2+) serves as cofactor.

The enzyme catalyses L-seryl-[protein] + ATP = 3-O-(5'-adenylyl)-L-seryl-[protein] + diphosphate. The catalysed reaction is L-threonyl-[protein] + ATP = 3-O-(5'-adenylyl)-L-threonyl-[protein] + diphosphate. It carries out the reaction L-tyrosyl-[protein] + ATP = O-(5'-adenylyl)-L-tyrosyl-[protein] + diphosphate. It catalyses the reaction L-histidyl-[protein] + UTP = N(tele)-(5'-uridylyl)-L-histidyl-[protein] + diphosphate. The enzyme catalyses L-seryl-[protein] + UTP = O-(5'-uridylyl)-L-seryl-[protein] + diphosphate. The catalysed reaction is L-tyrosyl-[protein] + UTP = O-(5'-uridylyl)-L-tyrosyl-[protein] + diphosphate. Functionally, nucleotidyltransferase involved in the post-translational modification of proteins. It can catalyze the addition of adenosine monophosphate (AMP) or uridine monophosphate (UMP) to a protein, resulting in modifications known as AMPylation and UMPylation. This chain is Protein nucleotidyltransferase YdiU, found in Bacillus cereus (strain AH187).